A 444-amino-acid polypeptide reads, in one-letter code: Glutamate-1-semialdehyde 2,1-aminomutase (444 aa).

Residue K278 is modified to N6-(pyridoxal phosphate)lysine.

Belongs to the class-III pyridoxal-phosphate-dependent aminotransferase family. HemL subfamily. As to quaternary structure, homodimer. It depends on pyridoxal 5'-phosphate as a cofactor.

Its subcellular location is the cytoplasm. It catalyses the reaction (S)-4-amino-5-oxopentanoate = 5-aminolevulinate. Its pathway is porphyrin-containing compound metabolism; protoporphyrin-IX biosynthesis; 5-aminolevulinate from L-glutamyl-tRNA(Glu): step 2/2. This Deinococcus radiodurans (strain ATCC 13939 / DSM 20539 / JCM 16871 / CCUG 27074 / LMG 4051 / NBRC 15346 / NCIMB 9279 / VKM B-1422 / R1) protein is Glutamate-1-semialdehyde 2,1-aminomutase.